Reading from the N-terminus, the 203-residue chain is Proteasome subunit beta 2 (203 aa).

The propeptide at 1–9 is removed in mature form; by autocatalysis; sequence MGEEVQIGA. Residue T10 is the Nucleophile of the active site.

It belongs to the peptidase T1B family. In terms of assembly, the 20S proteasome core is composed of 14 alpha and 14 beta subunits that assemble into four stacked heptameric rings, resulting in a barrel-shaped structure. The two inner rings, each composed of seven catalytic beta subunits, are sandwiched by two outer rings, each composed of seven alpha subunits. The catalytic chamber with the active sites is on the inside of the barrel. Has a gated structure, the ends of the cylinder being occluded by the N-termini of the alpha-subunits. Is capped at one or both ends by the proteasome regulatory ATPase, PAN.

It localises to the cytoplasm. The catalysed reaction is Cleavage of peptide bonds with very broad specificity.. With respect to regulation, the formation of the proteasomal ATPase PAN-20S proteasome complex, via the docking of the C-termini of PAN into the intersubunit pockets in the alpha-rings, triggers opening of the gate for substrate entry. Interconversion between the open-gate and close-gate conformations leads to a dynamic regulation of the 20S proteasome proteolysis activity. Its function is as follows. Component of the proteasome core, a large protease complex with broad specificity involved in protein degradation. The chain is Proteasome subunit beta 2 from Pyrobaculum aerophilum (strain ATCC 51768 / DSM 7523 / JCM 9630 / CIP 104966 / NBRC 100827 / IM2).